The sequence spans 528 residues: MDHCGALFLCLCLLTLQNATTETWEELLSYMENMQVSRGRSSVFSSRQLHQLEQMLLNTSFPGYNLTLQTPTIQSLAFKLSCDFSGLSLTSATLKRVPQAGGQHARGQHAMQFPAELTRDACKTRPRELRLICIYFSNTHFFKDENNSSLLNNYVLGAQLSHGHVNNLRDPVNISFWHNQSLEGYTLTCVFWKEGARKQPWGGWSPEGCRTEQPSHSQVLCRCNHLTYFAVLMQLSPALVPAELLAPLTYISLVGCSISIVASLITVLLHFHFRKQSDSLTRIHMNLHASVLLLNIAFLLSPAFAMSPVPGSACTALAAALHYALLSCLTWMAIEGFNLYLLLGRVYNIYIRRYVFKLGVLGWGAPALLVLLSLSVKSSVYGPCTIPVFDSWENGTGFQNMSICWVRSPVVHSVLVMGYGGLTSLFNLVVLAWALWTLRRLRERADAPSVRACHDTVTVLGLTVLLGTTWALAFFSFGVFLLPQLFLFTILNSLYGFFLFLWFCSQRCRSEAEAKAQIEAFSSSQTTQ.

The signal sequence occupies residues 1–21 (MDHCGALFLCLCLLTLQNATT). The Extracellular segment spans residues 22–245 (ETWEELLSYM…SPALVPAELL (224 aa)). Residues asparagine 58, asparagine 65, asparagine 146, asparagine 147, asparagine 173, and asparagine 179 are each glycosylated (N-linked (GlcNAc...) asparagine). Positions 78–239 (FKLSCDFSGL…AVLMQLSPAL (162 aa)) constitute a GAIN-B domain. 2 cysteine pairs are disulfide-bonded: cysteine 189–cysteine 221 and cysteine 209–cysteine 223. The tract at residues 189 to 239 (CVFWKEGARKQPWGGWSPEGCRTEQPSHSQVLCRCNHLTYFAVLMQLSPAL) is GPS. The tract at residues 228-236 (YFAVLMQLS) is stachel. The chain crosses the membrane as a helical span at residues 246-271 (APLTYISLVGCSISIVASLITVLLHF). The Cytoplasmic segment spans residues 272–280 (HFRKQSDSL). The helical transmembrane segment at 281–304 (TRIHMNLHASVLLLNIAFLLSPAF) threads the bilayer. Residues 305–314 (AMSPVPGSAC) lie on the Extracellular side of the membrane. Cysteine 314 and cysteine 404 are oxidised to a cystine. The chain crosses the membrane as a helical span at residues 315–340 (TALAAALHYALLSCLTWMAIEGFNLY). The Cytoplasmic portion of the chain corresponds to 341-353 (LLLGRVYNIYIRR). Residues 354–377 (YVFKLGVLGWGAPALLVLLSLSVK) traverse the membrane as a helical segment. The Extracellular segment spans residues 378–410 (SSVYGPCTIPVFDSWENGTGFQNMSICWVRSPV). Asparagine 394 and asparagine 400 each carry an N-linked (GlcNAc...) asparagine glycan. The chain crosses the membrane as a helical span at residues 411 to 435 (VHSVLVMGYGGLTSLFNLVVLAWAL). The Cytoplasmic portion of the chain corresponds to 436–455 (WTLRRLRERADAPSVRACHD). Residues 456 to 477 (TVTVLGLTVLLGTTWALAFFSF) traverse the membrane as a helical segment. Topologically, residues 478–481 (GVFL) are extracellular. The helical transmembrane segment at 482–505 (LPQLFLFTILNSLYGFFLFLWFCS) threads the bilayer. The Cytoplasmic segment spans residues 506–528 (QRCRSEAEAKAQIEAFSSSQTTQ).

The protein belongs to the G-protein coupled receptor 2 family. Adhesion G-protein coupled receptor (ADGR) subfamily. As to quaternary structure, heterodimer of 2 chains generated by proteolytic processing; the large extracellular N-terminal fragment and the membrane-bound C-terminal fragment predominantly remain associated and non-covalently linked. In terms of processing, autoproteolytically processed at the GPS region of the GAIN-B domain; this cleavage modulates receptor activity. Post-translationally, N-glycsylated. As to expression, expressed in immune cells. Primarily found in granulocytes. Found in eosinophils.

Its subcellular location is the cell membrane. Its activity is regulated as follows. Forms a heterodimer of 2 chains generated by proteolytic processing that remain associated through non-covalent interactions mediated by the GAIN-B domain. In the inactivated receptor, the Stachel sequence (also named stalk) is embedded in the GAIN-B domain, where it adopts a beta-strand conformation. On activation, the Stachel moves into the 7 transmembrane region and adopts a twisted hook-shaped configuration that forms contacts within the receptor, leading to coupling of a G-alpha protein, which activates signaling. The cleaved GAIN-B and N-terminal domains can then dissociate from the rest of the receptor. In terms of biological role, orphan adhesion G-protein coupled receptor (aGPCR). Ligand binding causes a conformation change that triggers signaling via guanine nucleotide-binding proteins (G proteins) and modulates the activity of downstream effectors, such as adenylate cyclase. ADGRG5 is specifically coupled to G(s) G proteins and mediates activation of adenylate cyclase activity. This Homo sapiens (Human) protein is Adhesion G-protein coupled receptor G5.